Consider the following 294-residue polypeptide: ATP synthase gamma chain (294 aa).

Belongs to the ATPase gamma chain family. F-type ATPases have 2 components, CF(1) - the catalytic core - and CF(0) - the membrane proton channel. CF(1) has five subunits: alpha(3), beta(3), gamma(1), delta(1), epsilon(1). CF(0) has three main subunits: a, b and c.

The protein localises to the cell membrane. In terms of biological role, produces ATP from ADP in the presence of a proton gradient across the membrane. The gamma chain is believed to be important in regulating ATPase activity and the flow of protons through the CF(0) complex. In Ruminiclostridium cellulolyticum (strain ATCC 35319 / DSM 5812 / JCM 6584 / H10) (Clostridium cellulolyticum), this protein is ATP synthase gamma chain.